A 989-amino-acid polypeptide reads, in one-letter code: Cation-chloride cotransporter 1 (989 aa).

Over residues 1–10 (MENGEIEGAA) the composition is skewed to acidic residues. The segment at 1–29 (MENGEIEGAADDGVPVPAPPNGRRYRPVG) is disordered. Residues 1–132 (MENGEIEGAA…GRPKETGPKF (132 aa)) are Cytoplasmic-facing. Residues 133–153 (GTMMGVFVPCLQNILGIIYYI) form a helical membrane-spanning segment. At 154 to 167 (RFTWIVGMAGVWQS) the chain is on the extracellular side. Residues 168–188 (LVLVSFCGACTFLTGISLSAI) form a helical membrane-spanning segment. Topologically, residues 189–214 (ATNGAMKGGGPYYLIGRALGPEVGVS) are cytoplasmic. Residues 215–235 (IGLCFFLGNAVAGSMYVLGAV) form a helical membrane-spanning segment. Over 236–280 (ETFLDAVPSAGFFKESVTVVNNTLVNGTATASTATISTPSLHDLQ) the chain is Extracellular. Asn256 and Asn261 each carry an N-linked (GlcNAc...) asparagine glycan. The helical transmembrane segment at 281–301 (VYGVIVTILLCFIVFGGVKII) threads the bilayer. The Cytoplasmic portion of the chain corresponds to 302–304 (NKV). A helical membrane pass occupies residues 305–325 (APAFLIPVLFSLLCIYLGVFI). Residues 326–365 (APRHNAPKGITGLSITTFKDNWGSEYQRTNNAGVPDPNGS) lie on the Extracellular side of the membrane. Asn363 is a glycosylation site (N-linked (GlcNAc...) asparagine). Residues 366-386 (IYWDFNALVGLFFPAVTGIMA) form a helical membrane-spanning segment. Topologically, residues 387–405 (GSNRSASLKDTQRSIPIGT) are cytoplasmic. The chain crosses the membrane as a helical span at residues 406–426 (LSATLTTTAMYLFSVLLFGAL). At 427 to 441 (ATREELLTDRLLTAT) the chain is on the extracellular side. Residues 442 to 462 (VAWPAPAVIYIGIILSTLGAA) form a helical membrane-spanning segment. Residues 463–498 (LQSLTGAPRLLAAIANDDILPVLNYFKVSEGAEPHS) lie on the Cytoplasmic side of the membrane. A helical transmembrane segment spans residues 499-519 (ATLFTAFICICCVVIGNLDLI). Residues 520 to 522 (TPT) are Extracellular-facing. A helical membrane pass occupies residues 523-543 (ITMFFLLCYAGVNLSCFLLDL). Over 544–551 (LDAPSWRP) the chain is Cytoplasmic. Residues 552-572 (RWKFHHWSLSLVGALLCVVIM) traverse the membrane as a helical segment. At 573–578 (FLISWS) the chain is on the extracellular side. The helical transmembrane segment at 579–599 (FTVVSLALASLIYYYVSLKGK) threads the bilayer. The Cytoplasmic portion of the chain corresponds to 600–989 (AGDWGDGFKS…YRRDVVTFFT (390 aa)).

This sequence belongs to the SLC12A transporter family. In terms of tissue distribution, expressed in roots, stems and leaves with higher expression in root and leaf tips.

It is found in the membrane. Functionally, probable cation/chloride cotransporter that may mediate potassium-chloride cotransport. Involved in plant development and K(+) and Cl(-) homeostasis. May not be involved in sodium-chloride cotransport. This Oryza sativa subsp. japonica (Rice) protein is Cation-chloride cotransporter 1 (CCC1).